The primary structure comprises 151 residues: MHALQAKILDPRLGQEFPLPQYATPGSAGLDLRAMLKEDIVLEPGQTVLIPTGLSIYIGDPGLAAMILPRSGLGHKHGIVLGNLVGLIDSDYQGELMVSCWNRGHTPFTIAIGERIAQLVLVPVVQAHFELVEQFDETQRGAGGFGHSGSH.

Substrate is bound by residues 70–72, N83, 87–89, and M97; these read RSG and LID.

This sequence belongs to the dUTPase family. The cofactor is Mg(2+).

The enzyme catalyses dUTP + H2O = dUMP + diphosphate + H(+). The protein operates within pyrimidine metabolism; dUMP biosynthesis; dUMP from dCTP (dUTP route): step 2/2. In terms of biological role, this enzyme is involved in nucleotide metabolism: it produces dUMP, the immediate precursor of thymidine nucleotides and it decreases the intracellular concentration of dUTP so that uracil cannot be incorporated into DNA. This chain is Deoxyuridine 5'-triphosphate nucleotidohydrolase, found in Ectopseudomonas mendocina (strain ymp) (Pseudomonas mendocina).